Consider the following 889-residue polypeptide: Phosphofurin acidic cluster sorting protein 2 (889 aa).

Disordered regions lie at residues 180–246, 293–463, and 687–740; these read DHED…TSMT, LDME…PDAR, and SSAT…SQGV. A compositionally biased stretch (basic and acidic residues) spans 343 to 358; that stretch reads SHKEPPSPADVPEKTR. Ser-390, Ser-416, Ser-453, Ser-691, and Ser-694 each carry phosphoserine. Composition is skewed to low complexity over residues 687–720 and 727–737; these read SSAT…KEAS and PSVSGGLSSPS.

It belongs to the PACS family. Interacts with BID and PKD2. Interacts with SIRT1. Interacts with HDAC1. Interacts with TRPV1. Interacts with WDR37. As to quaternary structure, (Microbial infection) Interacts with HIV-1 Nef. Broadly expressed, with greatest levels in skeletal muscle followed by heart, brain, pancreas and testis.

The protein localises to the endoplasmic reticulum. It localises to the mitochondrion. In terms of biological role, multifunctional sorting protein that controls the endoplasmic reticulum (ER)-mitochondria communication, including the apposition of mitochondria with the ER and ER homeostasis. In addition, in response to apoptotic inducer, translocates BIB to mitochondria, which initiates a sequence of events including the formation of mitochondrial truncated BID, the release of cytochrome c, the activation of caspase-3 thereby causing cell death. May also be involved in ion channel trafficking, directing acidic cluster-containing ion channels to distinct subcellular compartments. The sequence is that of Phosphofurin acidic cluster sorting protein 2 from Homo sapiens (Human).